The chain runs to 285 residues: MAGLGHPAAFGRATHAVVRALPESLGQHALRSAKGEEVDVARAERQHQLYVGVLGSKLGLQVVELPADESLPDCVFVEDVAVVCEETALITRPGAPSRRKEVDMMKEALEKLQLNIVEMKDENATLDGGDVLFTGREFFVGLSKRTNQRGAEILADTFKDYAVSTVPVADGLHLKSFCSMAGPNLIAIGSSESAQKALKIMQQMSDHRYDKLTVPDDIAANCIYLNIPNKGHVLLHRTPEEYPESAKVYEKLKDHMLIPVSMSELEKVDGLLTCCSVLINKKVDS.

An N-acetylalanine modification is found at A2. Residues L30, D73, E78–D79, R98, and R145 each bind substrate. H173 serves as the catalytic Proton donor. At C222 the chain carries S-nitrosocysteine. V268 lines the substrate pocket. The residue at position 274 (C274) is an S-nitrosocysteine. C274 serves as the catalytic Nucleophile. Zn(2+) is bound at residue C274.

The protein belongs to the DDAH family. Monomer. Detected in brain, liver, kidney and pancreas, and at low levels in skeletal muscle.

The enzyme catalyses N(omega),N(omega)-dimethyl-L-arginine + H2O = dimethylamine + L-citrulline. It catalyses the reaction N(omega)-methyl-L-arginine + H2O = L-citrulline + methylamine. With respect to regulation, inhibited by zinc ions. Enzyme purified in the absence of 1,10-phenanthroline contains on average 0.4 zinc atoms per subunit. Inhibited by 4-hydroxy-nonenal through the formation of a covalent adduct with His-173. Competitively inhibited by N(5)-iminopropyl-ornithine. Its function is as follows. Hydrolyzes N(G),N(G)-dimethyl-L-arginine (ADMA) and N(G)-monomethyl-L-arginine (MMA) which act as inhibitors of NOS. Has therefore a role in the regulation of nitric oxide generation. The chain is N(G),N(G)-dimethylarginine dimethylaminohydrolase 1 from Homo sapiens (Human).